The chain runs to 471 residues: Glutamate--tRNA ligase (471 aa).

The 'HIGH' region signature appears at 9–19; the sequence is PSPTGYLHVGG. Positions 98, 100, 125, and 127 each coordinate Zn(2+). Residues 237-241 carry the 'KMSKS' region motif; it reads KLSKR. Residue K240 coordinates ATP.

This sequence belongs to the class-I aminoacyl-tRNA synthetase family. Glutamate--tRNA ligase type 1 subfamily. In terms of assembly, monomer. Zn(2+) serves as cofactor.

It is found in the cytoplasm. The catalysed reaction is tRNA(Glu) + L-glutamate + ATP = L-glutamyl-tRNA(Glu) + AMP + diphosphate. Its function is as follows. Catalyzes the attachment of glutamate to tRNA(Glu) in a two-step reaction: glutamate is first activated by ATP to form Glu-AMP and then transferred to the acceptor end of tRNA(Glu). The sequence is that of Glutamate--tRNA ligase from Salmonella dublin (strain CT_02021853).